A 322-amino-acid polypeptide reads, in one-letter code: p55-v-Fos-transforming protein (322 aa).

The segment at 69–95 (APGGRGQSIGRRGKVEQLSPEEEEKRR) is disordered. The bZIP domain maps to 91–154 (EEKRRIRRER…EKLEFILAAH (64 aa)). Residues 93–113 (KRRIRRERNKMAAAKCRNRRR) form a basic motif region. The tract at residues 119 to 147 (LQAETDQLEEEKSALQAEIANLLKEKEKL) is leucine-zipper. The segment at 298–322 (AAHRKGSSSNEPSSDSLSSPTLLAL) is disordered. A compositionally biased stretch (low complexity) spans 304 to 316 (SSSNEPSSDSLSS).

Belongs to the bZIP family. Fos subfamily.

The protein resides in the host nucleus. This chain is p55-v-Fos-transforming protein (V-FOS), found in Galliformes.